We begin with the raw amino-acid sequence, 604 residues long: Protein TAX4 (604 aa).

Disordered regions lie at residues 38 to 77 (HPNG…PRSI), 132 to 249 (SFSN…RQQE), 267 to 299 (GTLP…QQEN), 338 to 380 (DETF…KGLK), and 394 to 428 (PFPH…NEDK). A compositionally biased stretch (polar residues) spans 176–185 (YDNNVRSRSI). 2 stretches are compositionally biased toward low complexity: residues 186–203 (SPQV…SISS) and 224–240 (SMSS…KASL). 3 stretches are compositionally biased toward basic residues: residues 276-290 (SQRK…HRLL), 366-379 (KKKK…KKGL), and 396-421 (PHHH…HTSS). The EH domain occupies 469–559 (ANEDDESHLQ…RVWNSVDGYV (91 aa)).

The protein belongs to the IRS4 family. As to quaternary structure, interacts with INP51.

With IRS4, acts as a positive regulator of INP51 activity and phosphatidylinositol 4,5-bisphosphate turnover. Negatively regulates signaling through the cell integrity pathway, including the MAP kinase SLT2. The protein is Protein TAX4 (TAX4) of Saccharomyces cerevisiae (strain ATCC 204508 / S288c) (Baker's yeast).